The sequence spans 1349 residues: Membrane-associated phosphatidylinositol transfer protein 2 (1349 aa).

The interval 262–344 (EDGEEATELV…RDSDESSDDE (83 aa)) is disordered. The segment covering 302–322 (KQWSTSSKSSRSSKRGASPSR) has biased composition (low complexity). Ser337, Ser341, Ser368, and Ser589 each carry phosphoserine. The span at 618–631 (GGGGGSSGGGGSSG) shows a compositional bias: gly residues. Residues 618–671 (GGGGGSSGGGGSSGGSSLESSRHLSRSNVDIPRSNGTEDPKRQLPRKRSDSSTY) are disordered. Ser644 is modified (phosphoserine). The segment covering 653–667 (GTEDPKRQLPRKRSD) has biased composition (basic and acidic residues). A phosphoserine mark is found at Ser700, Ser701, and Ser702. Residues 715–963 (FDFEITDLFL…VSFLLRQVMR (249 aa)) form the DDHD domain. The residue at position 828 (Arg828) is an Omega-N-methylarginine. The interval 876–900 (LPAPSPTTPGPHPPARKASPGLERA) is disordered. Pro residues predominate over residues 878–888 (APSPTTPGPHP). Ser1277 carries the post-translational modification Phosphoserine. Residues 1296-1326 (TISAQPSGPSHRHERTQSQADGEQRGQRSMS) are disordered.

Belongs to the PtdIns transfer protein family. PI transfer class IIA subfamily. Interacts with PTK2B via its C-terminus. Interacts with CPNE4 (via VWFA domain). In terms of tissue distribution, highly expressed in brain, heart, ovary, testis and thymus. Detected in small intestine, prostate, pancreas, skeletal muscle, liver, colon and placenta.

The protein resides in the endomembrane system. In terms of biological role, catalyzes the transfer of phosphatidylinositol and phosphatidylcholine between membranes (in vitro). Binds calcium ions. This Homo sapiens (Human) protein is Membrane-associated phosphatidylinositol transfer protein 2 (PITPNM2).